We begin with the raw amino-acid sequence, 202 residues long: MKWNQKNLPIVLASRSPARIELLNRIKIIPSHIIKADIDETPNLRELPAPLAVRLAYAKAIKVVSQIEESAIIIAADTVVAVGRRILPKATTYEEVKNCIKILSGRRHRVYTGLCIIKKENDRLTVRQKIAQTIVKFKKLSDEEINFYCSLDEGIDKAGGCKISGYAEAFIAFISGSYSNVMGLPLFETVNTLTSLGFKVYH.

The Proton acceptor role is filled by aspartate 77.

Belongs to the Maf family. The cofactor is a divalent metal cation.

The protein resides in the cytoplasm. It carries out the reaction a ribonucleoside 5'-triphosphate + H2O = a ribonucleoside 5'-phosphate + diphosphate + H(+). The catalysed reaction is a 2'-deoxyribonucleoside 5'-triphosphate + H2O = a 2'-deoxyribonucleoside 5'-phosphate + diphosphate + H(+). Its function is as follows. Nucleoside triphosphate pyrophosphatase. May have a dual role in cell division arrest and in preventing the incorporation of modified nucleotides into cellular nucleic acids. The sequence is that of Nucleoside triphosphate pyrophosphatase from Rickettsia canadensis (strain McKiel).